We begin with the raw amino-acid sequence, 136 residues long: MDRTIDDPVEASENDWRSKLTPEQFRITREGGTERAFTGAYWNHKGDGMYRCICCGAELFRSDRKFDSGTGWPSFWEGVNPEAIRTIQDVSHGMVRTEIRCAKCDSHLGHVFQDSPTPTGLRYCVNSASLDFKDKT.

The MsrB domain occupies 13–135; sequence ENDWRSKLTP…NSASLDFKDK (123 aa). Zn(2+) contacts are provided by Cys52, Cys55, Cys101, and Cys104. The active-site Nucleophile is the Cys124.

Belongs to the MsrB Met sulfoxide reductase family. Requires Zn(2+) as cofactor.

It catalyses the reaction L-methionyl-[protein] + [thioredoxin]-disulfide + H2O = L-methionyl-(R)-S-oxide-[protein] + [thioredoxin]-dithiol. In Synechococcus sp. (strain RCC307), this protein is Peptide methionine sulfoxide reductase MsrB.